The primary structure comprises 456 residues: Phosphoglucomutase/phosphomannomutase (456 aa).

Catalysis depends on Ser-101, which acts as the Phosphoserine intermediate. The Mg(2+) site is built by Ser-101, Asp-243, Asp-245, and Asp-247. A Phosphoserine; by autocatalysis modification is found at Ser-101.

Belongs to the phosphohexose mutase family. Homotetramer. Mg(2+) is required as a cofactor. Activated by phosphorylation.

It carries out the reaction alpha-D-glucose 1-phosphate = alpha-D-glucose 6-phosphate. The catalysed reaction is alpha-D-mannose 1-phosphate = D-mannose 6-phosphate. Functionally, catalyzes the interconversion of glucose 1-phosphate and glucose 6-phosphate, and the interconversion of mannose 1-phosphate and mannose 6-phosphate. Also displays low activity with deoxyribose 1-phosphate and glucosamine 1-phosphate. This chain is Phosphoglucomutase/phosphomannomutase, found in Thermococcus kodakarensis (strain ATCC BAA-918 / JCM 12380 / KOD1) (Pyrococcus kodakaraensis (strain KOD1)).